Here is a 251-residue protein sequence, read N- to C-terminus: S-acyl fatty acid synthase thioesterase, medium chain (251 aa).

Active-site residues include S90 and H226.

The protein belongs to the thioesterase family.

The enzyme catalyses (9Z)-octadecenoyl-[ACP] + H2O = (9Z)-octadecenoate + holo-[ACP] + H(+). In fatty acid biosynthesis chain termination and release of the free fatty acid product is achieved by hydrolysis of the thio ester by a thioesterase I, a component of the fatty acid synthetase complex. The chain length of the released fatty acid is usually C16. However, in the mammary glands of non-ruminant mammals, and in the uropygial gland of certain waterfowl there exists a second thioesterase which releases medium-chain length fatty acids (C8 to C2). This chain is S-acyl fatty acid synthase thioesterase, medium chain, found in Anas platyrhynchos (Mallard).